Consider the following 257-residue polypeptide: Chymotrypsin-like elastase family member 3B (257 aa).

The or 3 signal peptide spans 1–2; sequence VA. Positions 3–15 are cleaved as a propeptide — activation peptide; that stretch reads SGYGPPSSHPSSR. The Peptidase S1 domain maps to 16-255; it reads VVNGEDAVPY…FIDWIEETIA (240 aa). Asn-38 is a glycosylation site (N-linked (GlcNAc...) asparagine). 2 disulfides stabilise this stretch: Cys-45–Cys-61 and Cys-104–Cys-107. The active-site Charge relay system is His-60. Asp-110 serves as the catalytic Charge relay system. Cystine bridges form between Cys-144-Cys-210, Cys-175-Cys-191, and Cys-200-Cys-231. Ser-204 (charge relay system) is an active-site residue.

The protein belongs to the peptidase S1 family. Elastase subfamily.

The catalysed reaction is Preferential cleavage: Ala-|-Xaa. Does not hydrolyze elastin.. In terms of biological role, efficient protease with alanine specificity but only little elastolytic activity. The sequence is that of Chymotrypsin-like elastase family member 3B (CELA3B) from Macaca mulatta (Rhesus macaque).